We begin with the raw amino-acid sequence, 132 residues long: Hemoglobin subunit beta-1 (132 aa).

Positions 1–132 (WSKIDIDVCG…VVSALGRQYH (132 aa)) constitute a Globin domain. Heme b is bound by residues histidine 49 and histidine 78.

The protein belongs to the globin family. In terms of assembly, hb 1 is a heterotetramer of two alpha-1 and two beta-1 chains. Hb 2 is a heterotetramer of two alpha-2 and two beta-1 chains. As to expression, red blood cells.

Its function is as follows. Involved in oxygen transport from gills to the various peripheral tissues. This chain is Hemoglobin subunit beta-1 (hbb1), found in Arctogadus glacialis (Arctic cod).